The primary structure comprises 584 residues: Alkaline nuclease (584 aa).

The disordered stretch occupies residues 409-429 (GGGADHHLRGSPGDSPPPIPF).

The protein belongs to the herpesviridae alkaline nuclease family. As to quaternary structure, interacts with major DNA-binding protein; this interaction increases the nuclease processivity of the alkaline exonuclease.

Its subcellular location is the host nucleus. It is found in the host cytoplasm. Its function is as follows. Plays a role in processing non linear or branched viral DNA intermediates in order to promote the production of mature packaged unit-length linear progeny viral DNA molecules. Exhibits endonuclease and exonuclease activities and accepts both double-stranded and single-stranded DNA as substrate. Exonuclease digestion of DNA is in the 5'-&gt; 3' direction and the products are 5'-monophosphate nucleosides. Additionally, forms a recombinase with the major DNA-binding protein, which displays strand exchange activity. In Homo sapiens (Human), this protein is Alkaline nuclease (UL98).